Reading from the N-terminus, the 447-residue chain is Phosphoglucosamine mutase (447 aa).

Residue S101 is the Phosphoserine intermediate of the active site. 4 residues coordinate Mg(2+): S101, D242, D244, and D246. A Phosphoserine modification is found at S101.

The protein belongs to the phosphohexose mutase family. The cofactor is Mg(2+). Post-translationally, activated by phosphorylation.

It carries out the reaction alpha-D-glucosamine 1-phosphate = D-glucosamine 6-phosphate. Catalyzes the conversion of glucosamine-6-phosphate to glucosamine-1-phosphate. This Xanthobacter autotrophicus (strain ATCC BAA-1158 / Py2) protein is Phosphoglucosamine mutase.